Here is a 353-residue protein sequence, read N- to C-terminus: DNA polymerase IV (353 aa).

The UmuC domain maps to 6–187 (IIHIDCDCFY…LPVTKLHGVG (182 aa)). Mg(2+) contacts are provided by D10 and D105. E106 is a catalytic residue.

It belongs to the DNA polymerase type-Y family. As to quaternary structure, monomer. Mg(2+) is required as a cofactor.

Its subcellular location is the cytoplasm. It catalyses the reaction DNA(n) + a 2'-deoxyribonucleoside 5'-triphosphate = DNA(n+1) + diphosphate. Functionally, poorly processive, error-prone DNA polymerase involved in untargeted mutagenesis. Copies undamaged DNA at stalled replication forks, which arise in vivo from mismatched or misaligned primer ends. These misaligned primers can be extended by PolIV. Exhibits no 3'-5' exonuclease (proofreading) activity. May be involved in translesional synthesis, in conjunction with the beta clamp from PolIII. In Pseudomonas savastanoi pv. phaseolicola (strain 1448A / Race 6) (Pseudomonas syringae pv. phaseolicola (strain 1448A / Race 6)), this protein is DNA polymerase IV.